Reading from the N-terminus, the 274-residue chain is Small nuclear ribonucleoprotein-associated protein B (274 aa).

Residues 5-85 enclose the Sm domain; that stretch reads PKSSKMLQYI…VVSMSVEAPP (81 aa). Residues 148–274 form a disordered region; it reads PGGGVPPPMG…PMGRGGFQRK (127 aa). The stretch at 162–171 is repeat 1; sequence PPQGFPPGGP. The tract at residues 162–265 is 6 X 10 AA repeats of P-P-Q-G-F-P-P-G-G-P; it reads PPQGFPPGGP…PPQGFPPGGP (104 aa). Positions 173-187 are enriched in low complexity; sequence PQGAFNNNPNNNNGG. Tandem repeats lie at residues 188 to 197, 204 to 213, 225 to 234, 241 to 250, and 256 to 265. Residues 216 to 226 are compositionally biased toward low complexity; that stretch reads GPNLNNGNMPP. Residues 265–274 are compositionally biased toward gly residues; sequence PMGRGGFQRK.

It belongs to the snRNP SmB/SmN family.

The protein localises to the cytoplasm. The protein resides in the cytosol. Its subcellular location is the nucleus. Plays a role in pre-mRNA splicing as a core component of the spliceosomal U1, U2, U4 and U5 small nuclear ribonucleoproteins (snRNPs), the building blocks of the spliceosome. The chain is Small nuclear ribonucleoprotein-associated protein B (snrpb) from Dictyostelium discoideum (Social amoeba).